The chain runs to 359 residues: MAQQLTGEQTLDHYEDSTQASIFTYTNSNSTRGPFEGPNYHIAPRWVYHLTSTWMILVVIASVFTNGLVLAATMRFKKLRHPLNWILVNLAVADLAETIIASTISVVNQIYGYFVLGHPLCVIEGYIVSLCGITGLWSLAIISWERWLVVCKPFGNVRFDAKLATVGIVFSWVWAAVWTAPPIFGWSRYWPYGLKTSCGPDVFSGTSYPGVQSYMMVLMVTCCIFPLSIIVLCYLQVWLAIRAVAKQQKESESTQKAEKEVTRMVVVMVFAYCLCWGPYTFFACFATAHPGYAFHPLVASLPSYFAKSATIYNPIIYVFMNRQFRNCILQLFGKKVDDSSELSSTSKTEVSSVSSVSPA.

The Extracellular portion of the chain corresponds to 1–47 (MAQQLTGEQTLDHYEDSTQASIFTYTNSNSTRGPFEGPNYHIAPRWV). The required for 11-cis-retinal regeneration stretch occupies residues 12 to 38 (DHYEDSTQASIFTYTNSNSTRGPFEGP). An N-linked (GlcNAc...) asparagine glycan is attached at N29. A helical transmembrane segment spans residues 48–72 (YHLTSTWMILVVIASVFTNGLVLAA). At 73 to 84 (TMRFKKLRHPLN) the chain is on the cytoplasmic side. A helical transmembrane segment spans residues 85–110 (WILVNLAVADLAETIIASTISVVNQI). The Extracellular segment spans residues 111 to 124 (YGYFVLGHPLCVIE). The cysteines at positions 121 and 198 are disulfide-linked. Residues 125–144 (GYIVSLCGITGLWSLAIISW) form a helical membrane-spanning segment. Residues 145–163 (ERWLVVCKPFGNVRFDAKL) are Cytoplasmic-facing. Residues 164–187 (ATVGIVFSWVWAAVWTAPPIFGWS) traverse the membrane as a helical segment. Over 188-213 (RYWPYGLKTSCGPDVFSGTSYPGVQS) the chain is Extracellular. Residues 214-241 (YMMVLMVTCCIFPLSIIVLCYLQVWLAI) traverse the membrane as a helical segment. Residues 242–263 (RAVAKQQKESESTQKAEKEVTR) are Cytoplasmic-facing. Residues 264–287 (MVVVMVFAYCLCWGPYTFFACFAT) form a helical membrane-spanning segment. Residues 288-295 (AHPGYAFH) are Extracellular-facing. Residues 296–320 (PLVASLPSYFAKSATIYNPIIYVFM) traverse the membrane as a helical segment. At K307 the chain carries N6-(retinylidene)lysine. Residues 321-359 (NRQFRNCILQLFGKKVDDSSELSSTSKTEVSSVSSVSPA) lie on the Cytoplasmic side of the membrane.

This sequence belongs to the G-protein coupled receptor 1 family. Opsin subfamily. As to quaternary structure, monomer. Homodimer. Homotetramer. In terms of processing, O-glycosylated. Post-translationally, phosphorylated on some or all of the serine and threonine residues present in the C-terminal region. Expressed in cone photoreceptor cells.

The protein resides in the membrane. Visual pigments are the light-absorbing molecules that mediate vision. They consist of an apoprotein, opsin, covalently linked to cis-retinal. May increase spectral sensitivity in dim light. The sequence is that of Medium-wave-sensitive opsin 1 (Opn1mw) from Rattus norvegicus (Rat).